We begin with the raw amino-acid sequence, 226 residues long: ATP-dependent dethiobiotin synthetase BioD (226 aa).

Gly12 to Val17 lines the ATP pocket. Thr16 lines the Mg(2+) pocket. Residue Lys37 is part of the active site. Thr41 serves as a coordination point for substrate. ATP is bound by residues Asp49, Glu108 to Gly111, Gly169 to Ser170, and Pro197 to Gly199. 2 residues coordinate Mg(2+): Asp49 and Glu108.

It belongs to the dethiobiotin synthetase family. As to quaternary structure, homodimer. The cofactor is Mg(2+).

The protein localises to the cytoplasm. The enzyme catalyses (7R,8S)-7,8-diammoniononanoate + CO2 + ATP = (4R,5S)-dethiobiotin + ADP + phosphate + 3 H(+). It functions in the pathway cofactor biosynthesis; biotin biosynthesis; biotin from 7,8-diaminononanoate: step 1/2. Functionally, catalyzes a mechanistically unusual reaction, the ATP-dependent insertion of CO2 between the N7 and N8 nitrogen atoms of 7,8-diaminopelargonic acid (DAPA, also called 7,8-diammoniononanoate) to form a ureido ring. This Mycobacterium bovis (strain ATCC BAA-935 / AF2122/97) protein is ATP-dependent dethiobiotin synthetase BioD.